A 106-amino-acid chain; its full sequence is MAKAEKGVSAKKIAQERVDILFERAKEARDEPELSARYVSLAREMAMKQRVRLAHYHRRSFCPSCHAYFIPGTNLRVRIQHGKIIYTCGICGAVTRIPLNKKTESR.

The Zn(2+) site is built by C62, C65, C88, and C91.

It belongs to the eukaryotic/archaeal RNase P protein component 4 family. In terms of assembly, consists of a catalytic RNA component and at least 4-5 protein subunits. It depends on Zn(2+) as a cofactor.

The protein resides in the cytoplasm. The catalysed reaction is Endonucleolytic cleavage of RNA, removing 5'-extranucleotides from tRNA precursor.. Functionally, part of ribonuclease P, a protein complex that generates mature tRNA molecules by cleaving their 5'-ends. The polypeptide is Ribonuclease P protein component 4 (Methanocorpusculum labreanum (strain ATCC 43576 / DSM 4855 / Z)).